The chain runs to 430 residues: Adenylosuccinate synthetase (430 aa).

GTP is bound by residues 12 to 18 (GDEGKGK) and 40 to 42 (GHT). D13 (proton acceptor) is an active-site residue. D13 and G40 together coordinate Mg(2+). IMP is bound by residues 13–16 (DEGK), 38–41 (NAGH), T130, R144, Q224, T239, and R303. H41 serves as the catalytic Proton donor. 299–305 (TVTGRKR) lines the substrate pocket. Residues R305, 331–333 (KLD), and 413–415 (STS) contribute to the GTP site.

It belongs to the adenylosuccinate synthetase family. In terms of assembly, homodimer. It depends on Mg(2+) as a cofactor.

The protein resides in the cytoplasm. The enzyme catalyses IMP + L-aspartate + GTP = N(6)-(1,2-dicarboxyethyl)-AMP + GDP + phosphate + 2 H(+). It functions in the pathway purine metabolism; AMP biosynthesis via de novo pathway; AMP from IMP: step 1/2. Plays an important role in the de novo pathway of purine nucleotide biosynthesis. Catalyzes the first committed step in the biosynthesis of AMP from IMP. This Cereibacter sphaeroides (strain KD131 / KCTC 12085) (Rhodobacter sphaeroides) protein is Adenylosuccinate synthetase.